The chain runs to 588 residues: MSDKKIKGLEWQEKPLSDNERLKTDSNFLRGTILDDLKDGLTGGFKGDNFQLIRFHGMYEQDDRDIRAERLEEKLEPLKFMLLRCRLPGGIIKPYQWIEIDKFAREHTRYQSIRLTNRQTFQYHGVPKGKLQPMHRLLHSIGLDSIATAADMNRNVLCTSNPIESELHQQAYEFAKKISEHLLPRSRGYLDVWVDGKKVESSDDLLKIEDEPILGKTYLPRKFKTAVAIPPLNDVDVYANDLNFIAIQDENGQLCGFNVLVGGGLSFEHGNTKTYPNVAYSLGFVPLEHTLAAAEGVVKTQRDFGNRSDRKNARVRYTVQNMTLDGFRAEVERCMNIKFEPTRPYEFTERGDRIGWVKGIDNNWHLTLFIESGRITDKPEKPLMTGVLELAKVHKGDFRITANQNLIVANVAEQDKAQIEAIARQYGLIQEISKLRENAMSCVSLPTCPLAMAEAERVLPDFISELDKVLSKHNVADESIITRITGCPNGCRRAMLAEIGLVGKAIGRYNLHIGGDRAGLRIPRLYKENITLQEIVNEIDQLVARWATERQTNEAFGDFVIRSNIIAPVVNAHIDFWDATKIIPTTII.

4 residues coordinate [4Fe-4S] cluster: C442, C448, C487, and C491. C491 serves as a coordination point for siroheme.

This sequence belongs to the nitrite and sulfite reductase 4Fe-4S domain family. Alpha(8)-beta(8). The alpha component is a flavoprotein, the beta component is a hemoprotein. The cofactor is siroheme. [4Fe-4S] cluster serves as cofactor.

It carries out the reaction hydrogen sulfide + 3 NADP(+) + 3 H2O = sulfite + 3 NADPH + 4 H(+). It participates in sulfur metabolism; hydrogen sulfide biosynthesis; hydrogen sulfide from sulfite (NADPH route): step 1/1. Component of the sulfite reductase complex that catalyzes the 6-electron reduction of sulfite to sulfide. This is one of several activities required for the biosynthesis of L-cysteine from sulfate. This is Sulfite reductase [NADPH] hemoprotein beta-component from Actinobacillus pleuropneumoniae serotype 3 (strain JL03).